We begin with the raw amino-acid sequence, 90 residues long: Bombyxin D-1 (90 aa).

Positions 1-18 (MKLLGFFLSWVSVCAIVS) are cleaved as a signal peptide. 3 cysteine pairs are disulfide-bonded: cysteine 27/cysteine 77, cysteine 39/cysteine 90, and cysteine 76/cysteine 81. Residues 48–68 (SVAHYAGYGWPLLPSLSEERG) constitute a propeptide, c peptide like.

This sequence belongs to the insulin family. In terms of assembly, heterodimer of a B chain and an A chain linked by two disulfide bonds.

The protein resides in the secreted. Functionally, brain peptide responsible for activation of prothoracic glands to produce ecdysone in insects. The protein is Bombyxin D-1 (BBXD1) of Bombyx mori (Silk moth).